The sequence spans 149 residues: Large ribosomal subunit protein uL15 (149 aa).

Basic residues-rich tracts occupy residues 1-14 and 21-30; these read MPTR…HRGH and RVGKHRKHPG. The disordered stretch occupies residues 1-43; the sequence is MPTRFSKTRKHRGHVSAGKGRVGKHRKHPGGRGMAGGQHHHRT.

It belongs to the universal ribosomal protein uL15 family. Component of the large ribosomal subunit (LSU). Mature N.crassa ribosomes consist of a small (40S) and a large (60S) subunit. The 40S small subunit contains 1 molecule of ribosomal RNA (18S rRNA) and at least 32 different proteins. The large 60S subunit contains 3 rRNA molecules (26S, 5.8S and 5S rRNA) and at least 42 different proteins.

The protein resides in the cytoplasm. Its function is as follows. Component of the ribosome, a large ribonucleoprotein complex responsible for the synthesis of proteins in the cell. The small ribosomal subunit (SSU) binds messenger RNAs (mRNAs) and translates the encoded message by selecting cognate aminoacyl-transfer RNA (tRNA) molecules. The large subunit (LSU) contains the ribosomal catalytic site termed the peptidyl transferase center (PTC), which catalyzes the formation of peptide bonds, thereby polymerizing the amino acids delivered by tRNAs into a polypeptide chain. The nascent polypeptides leave the ribosome through a tunnel in the LSU and interact with protein factors that function in enzymatic processing, targeting, and the membrane insertion of nascent chains at the exit of the ribosomal tunnel. The chain is Large ribosomal subunit protein uL15 (rpl-28) from Neurospora crassa (strain ATCC 24698 / 74-OR23-1A / CBS 708.71 / DSM 1257 / FGSC 987).